The chain runs to 84 residues: Mitochondrial import inner membrane translocase subunit Tim9 (84 aa).

The short motif at 36–60 (CFQSCITNFRIRKLDDEEQLCVYKC) is the Twin CX3C motif element. 2 disulfides stabilise this stretch: cysteine 36/cysteine 60 and cysteine 40/cysteine 56.

It belongs to the small Tim family. Heterohexamer; composed of 3 copies of timm9 and 3 copies of timm10, named soluble 70 kDa complex. Associates directly with the TIM22 complex, whose core is composed of timm22. Interacts with the transmembrane regions of multi-pass transmembrane proteins in transit.

The protein localises to the mitochondrion inner membrane. Component of the TIM22 complex, a complex that mediates the import and insertion of multi-pass transmembrane proteins into the mitochondrial inner membrane. The TIM22 complex forms a twin-pore translocase that uses the membrane potential as external driving force. The chain is Mitochondrial import inner membrane translocase subunit Tim9 (timm9) from Dictyostelium discoideum (Social amoeba).